A 563-amino-acid chain; its full sequence is DEAD-box ATP-dependent RNA helicase 25 (563 aa).

Positions 21–57 (KKLTSDEDGSGKLVKDNNKSLKRGREGKSDVDEPLIK) are disordered. A compositionally biased stretch (basic and acidic residues) spans 23–56 (LTSDEDGSGKLVKDNNKSLKRGREGKSDVDEPLI). The residue at position 25 (S25) is a Phosphoserine. The short motif at 80-108 (TRFDQFPLSPLTLKGIEDAGFKTMTVVQE) is the Q motif element. A Helicase ATP-binding domain is found at 111-294 (LPLILQGKDI…HVALKRDHEF (184 aa)). 124-131 (AKTGTGKT) lines the ATP pocket. A DEAD box motif is present at residues 242-245 (DEAD). Residues 328–479 (LLKKHITDNV…AVKKVQKGLI (152 aa)) form the Helicase C-terminal domain.

This sequence belongs to the DEAD box helicase family.

It carries out the reaction ATP + H2O = ADP + phosphate + H(+). The chain is DEAD-box ATP-dependent RNA helicase 25 (RH25) from Arabidopsis thaliana (Mouse-ear cress).